Here is a 207-residue protein sequence, read N- to C-terminus: DNA protection during starvation protein 1 (207 aa).

The span at 1–12 (MTKKSTKSEAAS) shows a compositional bias: basic and acidic residues. Residues 1–31 (MTKKSTKSEAASKTKKSGVPETGAQGVRAGG) form a disordered region. Fe cation-binding residues include histidine 83, aspartate 110, and glutamate 114.

Belongs to the Dps family. As to quaternary structure, the 12 subunits form a hollow sphere into which the mineral iron core of up to 500 Fe(3+) can be deposited. The homododecameric forms at higher concentration of salt, the homodimeric form under reducing, low-salt conditions. The assembly of the dodecamer is irreversible.

The protein localises to the cytoplasm. Its subcellular location is the nucleoid. It carries out the reaction 2 Fe(2+) + H2O2 + 2 H(+) = 2 Fe(3+) + 2 H2O. Functionally, protects DNA from oxidative damage by sequestering intracellular Fe(2+) ion and storing it in the form of Fe(3+) oxyhydroxide mineral. One hydrogen peroxide oxidizes two Fe(2+) ions, which prevents hydroxyl radical production by the Fenton reaction. Both oligomeric forms of dps exhibit ferroxidase activity and DNA binding. Dodecameric dps is capable of Fe(2+) oxidation/mineralization. Only dimeric dps affords efficient DNA protection against hydroxyl radical-mediated cleavage. The chain is DNA protection during starvation protein 1 (dps1) from Deinococcus radiodurans (strain ATCC 13939 / DSM 20539 / JCM 16871 / CCUG 27074 / LMG 4051 / NBRC 15346 / NCIMB 9279 / VKM B-1422 / R1).